An 85-amino-acid chain; its full sequence is N.vectensis toxin 1 5 (85 aa).

A signal peptide spans 1-20 (MASFKIVIVCLALLVAVACA). The propeptide occupies 21–36 (RRRDMMSDDELDFHLS). Disulfide bonds link Cys42–Cys82, Cys44–Cys72, and Cys65–Cys83.

It belongs to the sea anemone sodium channel inhibitory toxin family. Type II subfamily. Expressed in ectodermal glands and in clumps outside of the extodermal layer. Is not expressed in nematocytes. In adult female tissues, shows similar expression levels in mesenteries (gametes-producing tissue), tentacles, pharynx and physa.

The protein resides in the secreted. Its function is as follows. Binds to site 3 of voltage-gated sodium channels and inhibits the inactivation process. Is highly active on DmNav1/TipE (drosophila) and is only extremely weakly active on rat Nav1.4-beta-1/SCN4A-SCN1B, and on human Nav1.5-beta-1/SCN5A-beta-1. This reveals high specificity for arthropod over mammalian channels. In vivo, when released into the medium, this recombinant toxin induces impaired swimming, paralysis and death of the crustacean A.nauplii within several hours. Also causes paralysis of cherry shrimps immediately after injection at very low doses. Its effect on zebrafish (D.rerio) larvae is also rapid, since it induces tail twitching accompanied by impaired swimming after 20 minutes and complete paralysis within 45 minutes. It has also been observed to cause death of zebrafish larvae within 1 hour. The sequence is that of N.vectensis toxin 1 5 from Nematostella vectensis (Starlet sea anemone).